The chain runs to 733 residues: 1,4-alpha-glucan branching enzyme GlgB (733 aa).

The active-site Nucleophile is aspartate 413. Glutamate 466 functions as the Proton donor in the catalytic mechanism.

Belongs to the glycosyl hydrolase 13 family. GlgB subfamily. Monomer.

The enzyme catalyses Transfers a segment of a (1-&gt;4)-alpha-D-glucan chain to a primary hydroxy group in a similar glucan chain.. The protein operates within glycan biosynthesis; glycogen biosynthesis. Its function is as follows. Catalyzes the formation of the alpha-1,6-glucosidic linkages in glycogen by scission of a 1,4-alpha-linked oligosaccharide from growing alpha-1,4-glucan chains and the subsequent attachment of the oligosaccharide to the alpha-1,6 position. In Leifsonia xyli subsp. xyli (strain CTCB07), this protein is 1,4-alpha-glucan branching enzyme GlgB.